Consider the following 105-residue polypeptide: Fe-S protein maturation auxiliary factor PG_1777 (105 aa).

Belongs to the Fe-S cluster assembly domain superfamily. MIP18-like family. As to quaternary structure, putative homodimer; may be disulfide-linked.

Its function is as follows. Iron binding protein that protects DNA from Fenton chemistry-mediated damage caused by hydrogen peroxide induced oxidative stress. May be involved in iron-sulfur cluster assembly. This chain is Fe-S protein maturation auxiliary factor PG_1777, found in Porphyromonas gingivalis (strain ATCC BAA-308 / W83).